The sequence spans 185 residues: Ribosome-recycling factor (185 aa).

It belongs to the RRF family.

The protein localises to the cytoplasm. Responsible for the release of ribosomes from messenger RNA at the termination of protein biosynthesis. May increase the efficiency of translation by recycling ribosomes from one round of translation to another. The chain is Ribosome-recycling factor from Geobacter sp. (strain M21).